Consider the following 494-residue polypeptide: UPF0371 protein SSA_0208 (494 aa).

The protein belongs to the UPF0371 family.

This chain is UPF0371 protein SSA_0208, found in Streptococcus sanguinis (strain SK36).